An 859-amino-acid chain; its full sequence is DNA mismatch repair protein MutS (859 aa).

Residue 622–629 participates in ATP binding; sequence GPNMGGKS.

The protein belongs to the DNA mismatch repair MutS family.

In terms of biological role, this protein is involved in the repair of mismatches in DNA. It is possible that it carries out the mismatch recognition step. This protein has a weak ATPase activity. In Coxiella burnetii (strain Dugway 5J108-111), this protein is DNA mismatch repair protein MutS.